The primary structure comprises 338 residues: Heat-inducible transcription repressor HrcA (338 aa).

It belongs to the HrcA family.

Its function is as follows. Negative regulator of class I heat shock genes (grpE-dnaK-dnaJ and groELS operons). Prevents heat-shock induction of these operons. The sequence is that of Heat-inducible transcription repressor HrcA from Thermotoga petrophila (strain ATCC BAA-488 / DSM 13995 / JCM 10881 / RKU-1).